The chain runs to 739 residues: Vascular cell adhesion protein 1 (739 aa).

A signal peptide spans 1–24 (MPVKMVAIFGASTVLWILFAVSQA). 7 consecutive Ig-like C2-type domains span residues 25 to 111 (FKIE…IQVD), 119 to 212 (PEIQ…KERE), 223 to 309 (PKNT…LIVQ), 312 to 397 (PFTV…KTIQ), 408 to 506 (EIEI…QTLY), 514 to 595 (PTIW…VELI), and 601 to 682 (KDIQ…RSLT). Topologically, residues 25 to 698 (FKIEISPEYK…ENNKDYFSPE (674 aa)) are extracellular. Cystine bridges form between Cys-47–Cys-95, Cys-52–Cys-99, Cys-137–Cys-195, Cys-246–Cys-291, and Cys-335–Cys-383. Asn-273 carries N-linked (GlcNAc...) asparagine glycosylation. N-linked (GlcNAc...) asparagine glycosylation is found at Asn-424, Asn-531, Asn-561, and Asn-650. A disulfide bond links Cys-534 and Cys-579. Residues 699-720 (LLALYFASSLVIPAIGMIIYFA) traverse the membrane as a helical segment. Over 721-739 (RKANMKGSYSLVEAQKSKV) the chain is Cytoplasmic.

As to quaternary structure, binds to ECMV-D capsid proteins and acts as a receptor for this virus. Post-translationally, cleaved by the metalloproteinase ADAM17 to generate the soluble form. In terms of processing, sialoglycoprotein. Ubiquitinated by TRIM65 via 'Lys-48'-linked ubiquitination; leading to proteasomal degradation. Expressed in aortic endothelial cells, with low expression in the descending thoracic aorta and the outer curvature of the aortic arch, where pulsatory shear stress exists, and high in the inner curvature of the aortic arch, where oscillatory shear stress prevails (at protein level). Expressed on inflamed vascular endothelium, as well as on macrophage-like and dendritic cell types in both normal and inflamed tissue.

The protein localises to the cell membrane. The protein resides in the secreted. Cell adhesion glycoprotein predominantly expressed on the surface of endothelial cells that plays an important role in immune surveillance and inflammation. Acts as a major regulator of leukocyte adhesion to the endothelium through interaction with different types of integrins. During inflammatory responses, binds ligands on the surface of activated endothelial cells to initiate the activation of calcium channels and the plasma membrane-associated small GTPase RAC1 leading to leukocyte transendothelial migration. Also serves as a quality-control checkpoint for entry into bone marrow by providing a 'don't-eat-me' stamping in the context of major histocompatibility complex (MHC) class-I presentation. This chain is Vascular cell adhesion protein 1 (Vcam1), found in Rattus norvegicus (Rat).